A 400-amino-acid chain; its full sequence is Argininosuccinate synthase (400 aa).

Residues 10-18 (AYSGGVDTS) and Ala-38 contribute to the ATP site. Tyr-89 serves as a coordination point for L-citrulline. Gly-119 lines the ATP pocket. L-aspartate is bound by residues Thr-121, Asn-125, and Asp-126. An L-citrulline-binding site is contributed by Asn-125. Residues Arg-129, Ser-177, Ser-186, Glu-262, and Tyr-274 each coordinate L-citrulline.

Belongs to the argininosuccinate synthase family. Type 1 subfamily. In terms of assembly, homotetramer.

The protein localises to the cytoplasm. The enzyme catalyses L-citrulline + L-aspartate + ATP = 2-(N(omega)-L-arginino)succinate + AMP + diphosphate + H(+). It participates in amino-acid biosynthesis; L-arginine biosynthesis; L-arginine from L-ornithine and carbamoyl phosphate: step 2/3. The sequence is that of Argininosuccinate synthase from Nostoc sp. (strain PCC 7120 / SAG 25.82 / UTEX 2576).